Consider the following 176-residue polypeptide: Cytochrome c-552 (176 aa).

Residues 12-32 (GALIGSLLFLLLMSWAASGIF) form a helical; Signal-anchor membrane-spanning segment. The heme c site is built by Cys90, Cys93, His94, Met126, and Met154.

In terms of processing, binds 1 heme c group covalently per subunit.

Its subcellular location is the cell membrane. Functionally, mediates the electron transport between the cytochrome bc1 complex and cytochrome-c oxidase. The polypeptide is Cytochrome c-552 (cycM) (Paracoccus denitrificans).